The primary structure comprises 1434 residues: Probable ATP-dependent DNA helicase HFM1 (1434 aa).

Residues 289–476 enclose the Helicase ATP-binding domain; it reads DDLLYTDRNF…WLSDGERPAV (188 aa). Residue 302–309 coordinates ATP; the sequence is APTGSGKT. The short motif at 410-413 is the DEAH box element; sequence DEVH. One can recognise a Helicase C-terminal domain in the interval 514-718; the sequence is KVYSVIRTYS…DVNIALDWIR (205 aa). In terms of domain architecture, SEC63 spans 775–1089; sequence PTEAGRLMAW…VGLDIHQKFT (315 aa). The disordered stretch occupies residues 1110–1130; it reads TDISHSDYSGRATATGSSKGM. A C4-type zinc finger spans residues 1141 to 1156; that stretch reads CHHHCKNKHACGHDCC. The tract at residues 1294–1333 is disordered; sequence GFGDTRDSSLGGSKLPFQKSSSRFQRDNSNSFASSPGKPD. The span at 1311–1327 shows a compositional bias: polar residues; it reads QKSSSRFQRDNSNSFAS.

The protein belongs to the helicase family. SKI2 subfamily. Zn(2+) serves as cofactor.

It carries out the reaction Couples ATP hydrolysis with the unwinding of duplex DNA by translocating in the 3'-5' direction.. The catalysed reaction is ATP + H2O = ADP + phosphate + H(+). Functionally, required for crossover formation and complete synapsis of homologous chromosomes during meiosis. The sequence is that of Probable ATP-dependent DNA helicase HFM1 from Mus musculus (Mouse).